Here is a 408-residue protein sequence, read N- to C-terminus: Putative mannan endo-1,4-beta-mannosidase P (408 aa).

A signal peptide spans 1-23 (MKCLCFIVLLAIVIAQSYVGVEA). N-linked (GlcNAc...) asparagine glycosylation is present at asparagine 73. 2 residues coordinate substrate: tryptophan 85 and asparagine 201. The Proton donor role is filled by glutamate 202. The Nucleophile role is filled by glutamate 322. Residue tryptophan 364 participates in substrate binding.

This sequence belongs to the glycosyl hydrolase 5 (cellulase A) family.

It is found in the secreted. It catalyses the reaction Random hydrolysis of (1-&gt;4)-beta-D-mannosidic linkages in mannans, galactomannans and glucomannans.. The polypeptide is Putative mannan endo-1,4-beta-mannosidase P (MANP) (Arabidopsis thaliana (Mouse-ear cress)).